We begin with the raw amino-acid sequence, 628 residues long: Leucine-rich repeat and fibronectin type-III domain-containing protein 3 (628 aa).

The first 16 residues, 1 to 16, serve as a signal peptide directing secretion; sequence MAVLPLLLCLLPLAPA. The Extracellular portion of the chain corresponds to 17 to 540; that stretch reads SSPPQPASPS…APHAPFLGGT (524 aa). An LRRNT domain is found at 19-59; sequence PPQPASPSPCPRRCRCQTQSLPLSVLCPGAGLLFVPPSLDR. 7 LRR repeats span residues 60 to 83, 84 to 105, 108 to 129, 132 to 153, 157 to 178, 181 to 202, and 205 to 226; these read RAAE…ANMT, GLLH…AFSD, ALRA…QLRG, NLRH…ALDD, TLED…ALGR, NVNT…AFSR, and KLAR…PLFS. The LRRCT domain maps to 249-295; sequence NPLHCNCELVWLRRLAREDDLEACASPPALGGRYFWAVGEEEFVCEP. In terms of domain architecture, Ig-like spans 295–382; that stretch reads PPVVTHRSPP…GEATAAVELT (88 aa). C317 and C366 are joined by a disulfide. N348 and N393 each carry an N-linked (GlcNAc...) asparagine glycan. Positions 380-433 are disordered; the sequence is ELTVGPPPPPQLANSTSCDPPRDGEPDALTPPSAASASASAKAAEAGPPTDRGV. Residues 410-428 show a composition bias toward low complexity; that stretch reads PPSAASASASAKAAEAGPP. Residues 427–525 form the Fibronectin type-III domain; sequence PPTDRGVQVT…GCNRFSTEPA (99 aa). Residues 541–561 form a helical membrane-spanning segment; that stretch reads MIIALGGVIVASVLVFIFVLL. The Cytoplasmic segment spans residues 562 to 628; it reads MRYKVHGGQP…WGPSHEPMGP (67 aa). The segment at 570–609 is disordered; sequence QPPGKTKASAPVSSVCSQTNGALGPMPAPPAPEPSAPRAH. The segment covering 580–590 has biased composition (polar residues); that stretch reads PVSSVCSQTNG. The segment covering 595–604 has biased composition (pro residues); it reads MPAPPAPEPS.

This sequence belongs to the LRFN family. As to quaternary structure, can form heteromeric complexes with LRFN1, LRFN2, LRFN4 and LRFN5. Able to form homomeric complexes across cell junctions, between adjacent cells. Does not interact with DLG4. N-glycosylated.

The protein resides in the cell membrane. It localises to the cell projection. The protein localises to the axon. It is found in the dendrite. Its subcellular location is the synapse. The protein resides in the presynaptic cell membrane. It localises to the postsynaptic cell membrane. Cell adhesion molecule that mediates homophilic cell-cell adhesion in a Ca(2+)-independent manner. Promotes neurite outgrowth in hippocampal neurons. In Bos taurus (Bovine), this protein is Leucine-rich repeat and fibronectin type-III domain-containing protein 3 (LRFN3).